The chain runs to 185 residues: Ribosome-recycling factor (185 aa).

Belongs to the RRF family.

The protein resides in the cytoplasm. Responsible for the release of ribosomes from messenger RNA at the termination of protein biosynthesis. May increase the efficiency of translation by recycling ribosomes from one round of translation to another. The protein is Ribosome-recycling factor of Shewanella sp. (strain W3-18-1).